Here is a 540-residue protein sequence, read N- to C-terminus: L-aspartate oxidase (540 aa).

FAD-binding positions include 16–19, Lys-38, 45–52, and Asp-223; these read SGAA and STFYAQGG. Arg-290 functions as the Proton donor/acceptor in the catalytic mechanism. FAD-binding positions include Glu-375 and 391–392; that span reads SL.

This sequence belongs to the FAD-dependent oxidoreductase 2 family. NadB subfamily. FAD is required as a cofactor.

Its subcellular location is the cytoplasm. It carries out the reaction L-aspartate + O2 = iminosuccinate + H2O2. The enzyme catalyses fumarate + L-aspartate = iminosuccinate + succinate. It participates in cofactor biosynthesis; NAD(+) biosynthesis; iminoaspartate from L-aspartate (oxidase route): step 1/1. Catalyzes the oxidation of L-aspartate to iminoaspartate, the first step in the de novo biosynthesis of NAD(+). Can use either oxygen or fumarate as electron acceptors, which allows the enzyme to be functional under aerobic and anaerobic conditions. The chain is L-aspartate oxidase (nadB) from Escherichia coli O157:H7.